Consider the following 196-residue polypeptide: Molybdenum cofactor guanylyltransferase (196 aa).

Residues 10-12, Lys23, Asn51, Asp69, and Asp99 contribute to the GTP site; that span reads LAG. Residue Asp99 participates in Mg(2+) binding.

Belongs to the MobA family. As to quaternary structure, monomer. The cofactor is Mg(2+).

The protein resides in the cytoplasm. The enzyme catalyses Mo-molybdopterin + GTP + H(+) = Mo-molybdopterin guanine dinucleotide + diphosphate. In terms of biological role, transfers a GMP moiety from GTP to Mo-molybdopterin (Mo-MPT) cofactor (Moco or molybdenum cofactor) to form Mo-molybdopterin guanine dinucleotide (Mo-MGD) cofactor. This chain is Molybdenum cofactor guanylyltransferase, found in Shewanella baltica (strain OS185).